A 194-amino-acid chain; its full sequence is Peptidyl-tRNA hydrolase (194 aa).

Tyr17 contacts tRNA. His22 (proton acceptor) is an active-site residue. Residues Phe68, Asn70, and Asn116 each contribute to the tRNA site.

The protein belongs to the PTH family. Monomer.

The protein resides in the cytoplasm. It catalyses the reaction an N-acyl-L-alpha-aminoacyl-tRNA + H2O = an N-acyl-L-amino acid + a tRNA + H(+). Its function is as follows. Hydrolyzes ribosome-free peptidyl-tRNAs (with 1 or more amino acids incorporated), which drop off the ribosome during protein synthesis, or as a result of ribosome stalling. In terms of biological role, catalyzes the release of premature peptidyl moieties from peptidyl-tRNA molecules trapped in stalled 50S ribosomal subunits, and thus maintains levels of free tRNAs and 50S ribosomes. The polypeptide is Peptidyl-tRNA hydrolase (Actinobacillus pleuropneumoniae serotype 7 (strain AP76)).